We begin with the raw amino-acid sequence, 913 residues long: Auxilin (913 aa).

Methionine 1 bears the N-acetylmethionine mark. A run of 3 repeats spans residues 36–39 (NLKD), 40–43 (NLKD), and 44–47 (TLKD). Residues 36-47 (NLKDNLKDTLKD) are 3 X 4 AA approximate tandem repeats. One can recognise a Phosphatase tensin-type domain in the interval 55–222 (SVTSYTKGDL…GYMCDLLADK (168 aa)). Serine 112 is subject to Phosphoserine. The Phosphocysteine intermediate role is filled by cysteine 164. One can recognise a C2 tensin-type domain in the interval 228-366 (FKPLTIKSIT…FQVTLDVELQ (139 aa)). The SH3-binding motif lies at 409 to 417 (PIDIPPDNP). The disordered stretch occupies residues 451–776 (QESEQSDDEL…GKGSSNLEGK (326 aa)). Phosphoserine is present on residues serine 453 and serine 456. A compositionally biased stretch (polar residues) spans 506 to 523 (AMSNSFSPPAAPPTNSEL). The segment covering 554 to 572 (ASTQSTPRRSATSTSASPT) has biased composition (low complexity). 2 positions are modified to phosphoserine: serine 563 and serine 570. Polar residues predominate over residues 599 to 629 (FLNTSSASSDPFLQPTRSPSPTVHASSTPAV). Residues 654 to 669 (SAATSPTGSSHGTPTH) are compositionally biased toward low complexity. The J domain maps to 849-913 (TKWKPVGMAD…FENQGQKPLY (65 aa)).

In terms of assembly, forms a complex composed of HSPA8, CLTC and DNAJC6. Interacts with HSPA8/HSC70 in an ATP-dependent manner; this interaction stimulates the HSPA8's ATPase activity. Interacts with CLTC; this interaction produces a local change in heavy-chain contacts, creating a detectable global distortion of the clathrin coat. Interacts with AP2A2. Interacts with DNM1(GTP-bound form); this interaction allows clathrin-coated vesicle (CCV) formation at the plasma membrane. In terms of processing, phosphorylation at Ser-570 modulates its ability to bind CLTC and therefore the synaptic vesicle endocytosis (SVE). Post-translationally, the N-terminus is blocked. In terms of tissue distribution, expressed in various brain regions, including cerebellum, corpus callosum, cortex, striatum, brainstem, pons, putamen, spinal cord and substantia nigra. Very low expression in non-neural tissues such as leukocytes, liver, adipose tissue, skeletal muscle and bone marrow.

The protein resides in the cytoplasmic vesicle. The protein localises to the clathrin-coated vesicle. Functionally, may act as a protein phosphatase and/or a lipid phosphatase. Co-chaperone that recruits HSPA8/HSC70 to clathrin-coated vesicles (CCVs) and promotes the ATP-dependent dissociation of clathrin from CCVs and participates in clathrin-mediated endocytosis of synaptic vesicles and their recycling and also in intracellular trafficking. Firstly, binds tightly to the clathrin cages, at a ratio of one DNAJC6 per clathrin triskelion. The HSPA8:ATP complex then binds to the clathrin-auxilin cage, initially at a ratio of one HSPA8 per triskelion leading to ATP hydrolysis stimulation and causing a conformational change in the HSPA8. This cycle is repeated three times to drive to a complex containing the clathrin-auxilin cage associated to three HSPA8:ADP complex. The ATP hydrolysis of the third HSPA8:ATP complex leads to a concerted dismantling of the cage into component triskelia. Then, dissociates from the released triskelia and be recycled to initiate another cycle of HSPA8's recruitment. Also acts during the early steps of clathrin-coated vesicle (CCV) formation through its interaction with the GTP bound form of DNM1. The polypeptide is Auxilin (Homo sapiens (Human)).